The sequence spans 1357 residues: DNA-directed RNA polymerase subunit beta (1357 aa).

The protein belongs to the RNA polymerase beta chain family. In terms of assembly, the RNAP catalytic core consists of 2 alpha, 1 beta, 1 beta' and 1 omega subunit. When a sigma factor is associated with the core the holoenzyme is formed, which can initiate transcription.

The enzyme catalyses RNA(n) + a ribonucleoside 5'-triphosphate = RNA(n+1) + diphosphate. Its function is as follows. DNA-dependent RNA polymerase catalyzes the transcription of DNA into RNA using the four ribonucleoside triphosphates as substrates. In Pseudomonas aeruginosa (strain LESB58), this protein is DNA-directed RNA polymerase subunit beta.